A 791-amino-acid chain; its full sequence is Subtilisin-like protease SBT5.6 (791 aa).

An N-terminal signal peptide occupies residues 1–20 (MKKLTSLFPLLFLIPLLASC). Positions 21-108 (AEEKQVYIVY…KSHPRKYEAH (88 aa)) are cleaved as a propeptide — activation peptide. The Inhibitor I9 domain maps to 26-104 (VYIVYFGEHK…VSVFKSHPRK (79 aa)). The Peptidase S8 domain maps to 134-645 (ADDRFRVGRN…SGHFRPTKAA (512 aa)). Asp-160 acts as the Charge relay system in catalysis. Asn-193 and Asn-219 each carry an N-linked (GlcNAc...) asparagine glycan. His-235 functions as the Charge relay system in the catalytic mechanism. Residues 400–494 (FAPLVYASNV…VTPTVVDKIL (95 aa)) form the PA domain. The N-linked (GlcNAc...) asparagine glycan is linked to Asn-417. The active-site Charge relay system is Ser-578. N-linked (GlcNAc...) asparagine glycosylation is found at Asn-666, Asn-713, and Asn-761.

The protein belongs to the peptidase S8 family.

It localises to the secreted. The protein is Subtilisin-like protease SBT5.6 of Arabidopsis thaliana (Mouse-ear cress).